The chain runs to 432 residues: Adenylosuccinate synthetase (432 aa).

Residues 13–19 (GDEGKGK) and 41–43 (GHT) contribute to the GTP site. The Proton acceptor role is filled by Asp-14. The Mg(2+) site is built by Asp-14 and Gly-41. IMP-binding positions include 14–17 (DEGK), 39–42 (NAGH), Thr-131, Arg-145, Gln-226, Thr-241, and Arg-305. His-42 serves as the catalytic Proton donor. 301-307 (SVTGRAR) provides a ligand contact to substrate. GTP is bound by residues Arg-307, 333–335 (KLD), and 416–418 (STG).

Belongs to the adenylosuccinate synthetase family. Homodimer. Mg(2+) serves as cofactor.

The protein localises to the cytoplasm. The enzyme catalyses IMP + L-aspartate + GTP = N(6)-(1,2-dicarboxyethyl)-AMP + GDP + phosphate + 2 H(+). Its pathway is purine metabolism; AMP biosynthesis via de novo pathway; AMP from IMP: step 1/2. Its function is as follows. Plays an important role in the de novo pathway of purine nucleotide biosynthesis. Catalyzes the first committed step in the biosynthesis of AMP from IMP. This Neisseria meningitidis serogroup A / serotype 4A (strain DSM 15465 / Z2491) protein is Adenylosuccinate synthetase.